Reading from the N-terminus, the 1058-residue chain is Structural maintenance of chromosomes protein 6A (1058 aa).

A Zinc-hook domain is found at 23–1049 (ILRIRLENFM…SMVKSHEKIK (1027 aa)). 50-57 (GQNGSGKS) contacts ATP. A coiled-coil region spans residues 136 to 449 (KISSRKEELR…NDLKKHQTNK (314 aa)). The segment at 450–633 (VTAFGGDKVI…PPRPRRPTRL (184 aa)) is flexible hinge. A coiled-coil region spans residues 634 to 927 (CASFDDQIKD…RNKDLLKREL (294 aa)).

This sequence belongs to the SMC family. SMC6 subfamily. As to quaternary structure, forms a heterodimer with SMC5. The SMC5-SMC6 complex is composed of the SMC5 and SMC6 heterodimer attached via their hinge domain and from the non-SMC subunit NSE4A or NSE4B. Expressed in seedlings, rosette leaves and floral buds.

The protein resides in the nucleus. The protein localises to the chromosome. Its function is as follows. Core component of the SMC5-SMC6 complex that promotes sister chromatid alignment after DNA damage and facilitates double-stranded DNA breaks (DSBs) repair via homologous recombination between sister chromatids. The polypeptide is Structural maintenance of chromosomes protein 6A (SMC6A) (Arabidopsis thaliana (Mouse-ear cress)).